Here is a 275-residue protein sequence, read N- to C-terminus: 2,3,4,5-tetrahydropyridine-2,6-dicarboxylate N-succinyltransferase (275 aa).

Substrate contacts are provided by Arg-105 and Asp-142.

This sequence belongs to the transferase hexapeptide repeat family. As to quaternary structure, homotrimer.

The protein resides in the cytoplasm. It carries out the reaction (S)-2,3,4,5-tetrahydrodipicolinate + succinyl-CoA + H2O = (S)-2-succinylamino-6-oxoheptanedioate + CoA. It participates in amino-acid biosynthesis; L-lysine biosynthesis via DAP pathway; LL-2,6-diaminopimelate from (S)-tetrahydrodipicolinate (succinylase route): step 1/3. The polypeptide is 2,3,4,5-tetrahydropyridine-2,6-dicarboxylate N-succinyltransferase (Histophilus somni (strain 129Pt) (Haemophilus somnus)).